Reading from the N-terminus, the 861-residue chain is MSDVQTLEYKGKVVQFAPENPREAEIPADELHEHLQNPSTERTRRLKARCRWKHAAAGEFCEKGVTAGIERMRLLTESHWATRGEPEPIRRAHGLKNILDKSTLVLQTDEFIVGYHAEDPNMFPLYPELSYMAVQDYLKSKYSPQPAKEAQEIVDYWKPFSLQARCEPYFDPVDLHRGYQVSTIEGPVFATGYNSVIPPYETVLEDGLQARIALAEEKIEHARAEMEKFPWHAPSGLEWIDKIDNWKAMVIACKAVIAWARRHARLCKIVAEHFETDPKRKAELLEIADICQRMPAEPARGLKDAMQSKWFTFLICHAIERYASGFAQKEDSLLWPYYKASVIDKTFQPMEHKDAVELIEMERLKVSEHGAGKSRAYREIFPGSNDLFILTLGGTNGDGSDACNDMTDAILEATKRIRTTEPSIVFRYSKKNRAKTLRWVFECIRDGLGYPSIKHNELGVQQMLEMAKYSRNGNGATPEEAHYWVNVLCMAPGLAGRRKAQKTRSEGGSAIFPAKLLEITLNNGYDWSYADMQMGPETGYAKDFATFDQLWEAFRKQYQYAIALAIRCKDVSRTMECRFLQMPFVSALDDGCMELGMDANALSEQPNGWHNPITSIVAGNSLVAIKKLIYDEKKYTMAQLMDALQANWEGYEEMRRDFKNAPKWGNDDDDADVLISRFYEEILGGEMMKNINYSGGPVKPTGQAVGLYMEVGSRTGPTPDGRFGGEAADDGGISPYSGTDKKGPTAVLRSVSKVQKNQKANLLNQRLSVPIMRSKHGFDIWHAYMDTWHDLNIDHVQFNVVSTEEMKAAQREPEKHQDLIVRVSGFSARFVDIPTYGQNTIIARNEQNFNAQDLEFLNVEL.

Residues 40–712 (TERTRRLKAR…QAVGLYMEVG (673 aa)) form the PFL domain. Residues 718–744 (TPDGRFGGEAADDGGISPYSGTDKKGP) form a disordered region. Residues 731-850 (GGISPYSGTD…IIARNEQNFN (120 aa)) form the Glycine radical domain. Glycine 825 bears the Glycine radical mark.

This sequence belongs to the glycyl radical enzyme (GRE) family. BSS subfamily. Heterohexamer composed of 2 alpha subunits, 2 beta subunits and 2 gamma subunits.

The catalysed reaction is toluene + fumarate = 2-benzylsuccinate. Its pathway is xenobiotic degradation; toluene degradation. With respect to regulation, activated by the benzylsuccinate synthase activating enzyme BssD. Rapidly inactivated by oxygen. Functionally, catalyzes the addition of fumarate to the methyl group of toluene, leading to the formation of benzylsuccinate. This Thauera aromatica protein is Benzylsuccinate synthase alpha subunit (bssA).